A 360-amino-acid chain; its full sequence is DNA replication and repair protein RecF (360 aa).

Residue 30–37 (GQNGSGKT) coordinates ATP.

This sequence belongs to the RecF family.

It is found in the cytoplasm. The RecF protein is involved in DNA metabolism; it is required for DNA replication and normal SOS inducibility. RecF binds preferentially to single-stranded, linear DNA. It also seems to bind ATP. In Shewanella sp. (strain W3-18-1), this protein is DNA replication and repair protein RecF.